The chain runs to 1435 residues: DNA polymerase III PolC-type (1435 aa).

An Exonuclease domain is found at 404–562; that stretch reads YVVYDIETTG…YDSSVLTNIF (159 aa).

Belongs to the DNA polymerase type-C family. PolC subfamily.

It is found in the cytoplasm. The catalysed reaction is DNA(n) + a 2'-deoxyribonucleoside 5'-triphosphate = DNA(n+1) + diphosphate. Required for replicative DNA synthesis. This DNA polymerase also exhibits 3' to 5' exonuclease activity. The chain is DNA polymerase III PolC-type from Mycoplasmopsis pulmonis (strain UAB CTIP) (Mycoplasma pulmonis).